We begin with the raw amino-acid sequence, 208 residues long: Nascent polypeptide-associated complex subunit alpha (208 aa).

Residues 1 to 19 (MSSSRIEELPDDDVPKTTV) are compositionally biased toward basic and acidic residues. Disordered stretches follow at residues 1–50 (MSSS…HSRN) and 120–166 (QLAA…VFDA). Residues 21–34 (DAADSSESEVEGAE) are compositionally biased toward acidic residues. In terms of domain architecture, NAC-A/B spans 48–113 (SRNEKKARKA…AKIEDLNSQA (66 aa)). Low complexity predominate over residues 120–131 (QLAAAEAAGSNE). The segment covering 132–154 (HAGHDHASHDHGKGKAVESADKK) has biased composition (basic and acidic residues). Acidic residues predominate over residues 155 to 164 (DEEEDDEEVF). The 40-residue stretch at 169-208 (LEAKDIELVMAQASVSRNKAIKALKENDNDIVNSIMALSV) folds into the UBA domain.

Belongs to the NAC-alpha family. Part of the nascent polypeptide-associated complex (NAC), consisting of EGD2 and EGD1. NAC associates with ribosomes via EGD1.

It is found in the cytoplasm. It localises to the nucleus. Functionally, component of the nascent polypeptide-associated complex (NAC), a dynamic component of the ribosomal exit tunnel, protecting the emerging polypeptides from interaction with other cytoplasmic proteins to ensure appropriate nascent protein targeting. The NAC complex also promotes mitochondrial protein import by enhancing productive ribosome interactions with the outer mitochondrial membrane and blocks the inappropriate interaction of ribosomes translating non-secretory nascent polypeptides with translocation sites in the membrane of the endoplasmic reticulum. EGD2 may also be involved in transcription regulation. This is Nascent polypeptide-associated complex subunit alpha (EGD2) from Ajellomyces capsulatus (strain NAm1 / WU24) (Darling's disease fungus).